Here is a 117-residue protein sequence, read N- to C-terminus: Large ribosomal subunit protein bL20 (117 aa).

Belongs to the bacterial ribosomal protein bL20 family.

Its function is as follows. Binds directly to 23S ribosomal RNA and is necessary for the in vitro assembly process of the 50S ribosomal subunit. It is not involved in the protein synthesizing functions of that subunit. The polypeptide is Large ribosomal subunit protein bL20 (Aliivibrio fischeri (strain ATCC 700601 / ES114) (Vibrio fischeri)).